The chain runs to 338 residues: Clavatol oxidase claD (338 aa).

A Fe2OG dioxygenase domain is found at 193 to 299 (DPMSLLRLLH…RYSVVFFYDG (107 aa)). Residues histidine 222, aspartate 224, and histidine 280 each contribute to the Fe cation site. Arginine 290 is a 2-oxoglutarate binding site.

This sequence belongs to the iron/ascorbate-dependent oxidoreductase family. Fe(2+) is required as a cofactor.

It carries out the reaction clavatol + 2-oxoglutarate + O2 = hydroxyclavatol + succinate + CO2. The protein operates within secondary metabolite biosynthesis. In terms of biological role, 2-oxoglutarate-dependent dioxygenase; part of the cla gene cluster that produces clavatol and ortho-quinone methide. The clavatol biosynthesis cluster cla and the terrestric acid cluster tra are both involved in the production of peniphenones and penilactones. The non-reducing PKS claF is responsible for the formation of clavatol from successive condensations of 3 malonyl-CoA units, presumably with a simple acetyl-CoA starter unit, and 2 methylation steps. The esterase claE probably collaborates with claF by catalyzing the hydrolysis of ACP-bound acyl intermediates to free the ACP from stalled intermediates. The clavatol oxidase claD then converts clavatol to hydroxyclavatol. Spontaneous dehydration of hydroxyclavatol leads to the accumulation of the highly active ortho-quinone methide. On the other hand, the PKS-NRPS hybrid traA is involved in the formation of crustosic acid, with the help of traB and traD. The polyketide synthase module (PKS) of traA is responsible for the synthesis of the polyketide backbone via the condensation of an acetyl-CoA starter unit with 3 malonyl-CoA units. The downstream nonribosomal peptide synthetase (NRPS) module then amidates the carboxyl end of the polyketide with L-malic acid. Because traA lacks a designated enoylreductase (ER) domain, the required activity is provided the enoyl reductase traG. Crustosic acid undergoes decarboxylation and isomerization to the terrestric acid, catalyzed by the 2-oxoglutarate-dependent dioxygenase traH. Both acids are further converted to the 2 gamma-butyrolactones (R)-5-methyltetronic acid and (S)-5-carboxylmethyltetronic acid, with involvement of the cytochrome P450 monooxygenase claJ. Spontaneous addition of the methide to these gamma-butyrolactones leads to peniphenone D and penilactone D, which undergo again stereospecific attacking by methide to give penilactones A and B. This Penicillium crustosum (Blue mold fungus) protein is Clavatol oxidase claD.